The primary structure comprises 548 residues: Membrane protein insertase YidC (548 aa).

A helical membrane pass occupies residues 6-26 (NLLVIALLFVSFMIWQAWEQD). The tract at residues 28–58 (NPQPQQQQTTQTTTTAAGSAADQGVPASGQG) is disordered. A compositionally biased stretch (low complexity) spans 29-42 (PQPQQQQTTQTTTT). The next 4 helical transmembrane spans lie at 350 to 370 (FLGNWGFSIIVITFIVRGIMY), 420 to 440 (LGGCFPLLIQMPIFLALYYML), 458 to 478 (LSAQDPYYILPILMGITMFFI), and 499 to 519 (PVIFTVFFLWFPSGLVLYYIV).

This sequence belongs to the OXA1/ALB3/YidC family. Type 1 subfamily. As to quaternary structure, interacts with the Sec translocase complex via SecD. Specifically interacts with transmembrane segments of nascent integral membrane proteins during membrane integration.

It localises to the cell inner membrane. Its function is as follows. Required for the insertion and/or proper folding and/or complex formation of integral membrane proteins into the membrane. Involved in integration of membrane proteins that insert both dependently and independently of the Sec translocase complex, as well as at least some lipoproteins. Aids folding of multispanning membrane proteins. The chain is Membrane protein insertase YidC from Enterobacter sp. (strain 638).